The following is a 1028-amino-acid chain: Formate dehydrogenase major subunit (1028 aa).

The segment at residues 1–33 is a signal peptide (tat-type signal); it reads MQVSRRKFFKICAGGMAGTSAAMLGFAPANVLA. The 4Fe-4S Mo/W bis-MGD-type domain occupies 43 to 114; that stretch reads AFESRNTCTY…GSLDYVNSES (72 aa). [4Fe-4S] cluster contacts are provided by Cys-50, Cys-53, Cys-57, and Cys-100. Sec-204 is a non-standard amino acid (selenocysteine).

The protein belongs to the prokaryotic molybdopterin-containing oxidoreductase family. Formate dehydrogenase is a membrane-bound complex, formed by subunits alpha, beta and gamma. Mo-bis(molybdopterin guanine dinucleotide) serves as cofactor. Requires [4Fe-4S] cluster as cofactor. Post-translationally, predicted to be exported by the Tat system. The position of the signal peptide cleavage has not been experimentally proven.

It is found in the periplasm. It carries out the reaction formate + NAD(+) = CO2 + NADH. Allows to use formate as major electron donor during anaerobic respiration. Subunit alpha possibly forms the active site. The polypeptide is Formate dehydrogenase major subunit (fdxG) (Haemophilus influenzae (strain ATCC 51907 / DSM 11121 / KW20 / Rd)).